We begin with the raw amino-acid sequence, 305 residues long: Probable cell division protein WhiA (305 aa).

The H-T-H motif DNA-binding region spans 269–302 (TIKELGELLEPSLGKSGVNHRLRKLVEQANELRK).

Belongs to the WhiA family.

In terms of biological role, involved in cell division and chromosome segregation. The chain is Probable cell division protein WhiA from Lactococcus lactis subsp. lactis (strain IL1403) (Streptococcus lactis).